A 702-amino-acid chain; its full sequence is Elongation factor G (702 aa).

A tr-type G domain is found at 8–290 (ERYRNIGISA…GVVEYLPSPV (283 aa)). GTP-binding positions include 17-24 (AHIDAGKT), 88-92 (DTPGH), and 142-145 (NKMD).

This sequence belongs to the TRAFAC class translation factor GTPase superfamily. Classic translation factor GTPase family. EF-G/EF-2 subfamily.

It localises to the cytoplasm. Catalyzes the GTP-dependent ribosomal translocation step during translation elongation. During this step, the ribosome changes from the pre-translocational (PRE) to the post-translocational (POST) state as the newly formed A-site-bound peptidyl-tRNA and P-site-bound deacylated tRNA move to the P and E sites, respectively. Catalyzes the coordinated movement of the two tRNA molecules, the mRNA and conformational changes in the ribosome. The protein is Elongation factor G of Janthinobacterium sp. (strain Marseille) (Minibacterium massiliensis).